The chain runs to 46 residues: Delta-actitoxin-Avd1d (46 aa).

Cystine bridges form between C4–C44, C6–C34, and C27–C45.

The protein belongs to the sea anemone sodium channel inhibitory toxin family. Type I subfamily.

It localises to the secreted. The protein localises to the nematocyst. Functionally, binds specifically to voltage-gated sodium channels (Nav), thereby delaying their inactivation during signal transduction. Thus it strongly stimulates mammalian cardiac muscle contraction. The sequence is that of Delta-actitoxin-Avd1d from Anemonia sulcata (Mediterranean snakelocks sea anemone).